A 334-amino-acid polypeptide reads, in one-letter code: Nucleoid-associated protein ESA_01050 (334 aa).

Belongs to the YejK family.

The protein resides in the cytoplasm. Its subcellular location is the nucleoid. This chain is Nucleoid-associated protein ESA_01050, found in Cronobacter sakazakii (strain ATCC BAA-894) (Enterobacter sakazakii).